The sequence spans 327 residues: Small ribosomal subunit protein RACK1 (327 aa).

7 WD repeats span residues 13-44 (AHTDMVTAIATPIDNSDTIVSASRDKSIIVWK), 61-91 (GHSHFVEDVVLSSDGQFALSGSWDGELRLWD), 103-133 (GHTKDVLSVAFSLDNRQIVSASRDRTIKLWN), 148-180 (GHRDWVSCVRFSPNTLQPTIVSASCDKTVKVWN), 192-222 (GHTGYVSTVAVSPDGSLCASGGKDGVVLLWD), 233-262 (EANSVIHALCFTPNRYWLCAATEQGIKIWD), and 293-323 (RKVIYCTSLNWSADGSTLFSGYTDGVIRVWG).

The protein belongs to the WD repeat G protein beta family. Ribosomal protein RACK1 subfamily.

In Brassica napus (Rape), this protein is Small ribosomal subunit protein RACK1 (GB1).